We begin with the raw amino-acid sequence, 726 residues long: Uracil catabolism protein 2 (726 aa).

A DNA-binding region (zn(2)-C6 fungal-type) is located at residues Cys-24 to Cys-53. Disordered stretches follow at residues Ala-152–Gly-183 and Ser-629–Asp-681. The segment covering Tyr-161–Asp-170 has biased composition (acidic residues). The span at Arg-640–Gly-679 shows a compositional bias: polar residues.

The protein belongs to the URC2 family.

The protein localises to the nucleus. Its function is as follows. Probable transcriptional activator involved in uracil catabolism. The polypeptide is Uracil catabolism protein 2 (URC2) (Lachancea kluyveri (Yeast)).